Reading from the N-terminus, the 552-residue chain is Urocanate hydratase (552 aa).

NAD(+)-binding positions include 49–50 (GG), Q127, 173–175 (GMG), D193, 239–240 (NA), 260–264 (QTSAH), 270–271 (YI), and Y319. C407 is a catalytic residue. G489 is a binding site for NAD(+).

This sequence belongs to the urocanase family. NAD(+) is required as a cofactor.

Its subcellular location is the cytoplasm. The enzyme catalyses 4-imidazolone-5-propanoate = trans-urocanate + H2O. Its pathway is amino-acid degradation; L-histidine degradation into L-glutamate; N-formimidoyl-L-glutamate from L-histidine: step 2/3. Catalyzes the conversion of urocanate to 4-imidazolone-5-propionate. The polypeptide is Urocanate hydratase (Bacillus cereus (strain B4264)).